The following is a 343-amino-acid chain: Arginine-hydroxylase NDUFAF5, mitochondrial (343 aa).

Residues 1 to 29 constitute a mitochondrion transit peptide; that stretch reads MLRKVVLLRLCPLLGRPAVSASSGSRREV.

This sequence belongs to the methyltransferase superfamily. In terms of assembly, interacts with NDUFAF8, leading to stabilize NDUFAF5. Interacts with NDUFS7. Interacts with PYURF (via TRM112 domain); the interaction is direct and stabilizes NDUFAF5 protein.

The protein localises to the mitochondrion inner membrane. Functionally, arginine hydroxylase that mediates hydroxylation of 'Arg-122' of NDUFS7 and is involved in the assembly of mitochondrial NADH:ubiquinone oxidoreductase complex (complex I, MT-ND1) at early stages. May also have methyltransferase activity. This is Arginine-hydroxylase NDUFAF5, mitochondrial from Mus musculus (Mouse).